The chain runs to 365 residues: Pyruvate dehydrogenase E1 component subunit beta, mitochondrial (365 aa).

The N-terminal 24 residues, 1-24 (MLRTRLIQAASSAQRAFSTSQKAL), are a transit peptide targeting the mitochondrion. Glutamate 85 serves as a coordination point for thiamine diphosphate. K(+) contacts are provided by isoleucine 138, alanine 186, isoleucine 187, and aspartate 189.

Thiamine diphosphate is required as a cofactor. Expressed in salivary glands (at protein level).

Its subcellular location is the mitochondrion matrix. The catalysed reaction is N(6)-[(R)-lipoyl]-L-lysyl-[protein] + pyruvate + H(+) = N(6)-[(R)-S(8)-acetyldihydrolipoyl]-L-lysyl-[protein] + CO2. Functionally, the pyruvate dehydrogenase complex catalyzes the overall conversion of pyruvate to acetyl-CoA and CO(2). Might play a role in regulating synapse structure formation at neuromuscular junctions. Might play a role in maintenance of mitochondrial morphology. The polypeptide is Pyruvate dehydrogenase E1 component subunit beta, mitochondrial (Drosophila melanogaster (Fruit fly)).